A 458-amino-acid polypeptide reads, in one-letter code: Cysteine protease ATG4C (458 aa).

The residue at position 1 (M1) is an N-acetylmethionine. Residue C111 is the Nucleophile of the active site. Catalysis depends on residues D345 and H347. S451 is subject to Phosphoserine. T452 is subject to Phosphothreonine.

Belongs to the peptidase C54 family.

Its subcellular location is the cytoplasm. The catalysed reaction is [protein]-C-terminal L-amino acid-glycyl-phosphatidylethanolamide + H2O = [protein]-C-terminal L-amino acid-glycine + a 1,2-diacyl-sn-glycero-3-phosphoethanolamine. With respect to regulation, inhibited by N-ethylmaleimide. Cysteine protease that plays a key role in autophagy by mediating both proteolytic activation and delipidation of ATG8 family proteins. The protease activity is required for proteolytic activation of ATG8 family proteins: cleaves the C-terminal amino acid of ATG8 proteins MAP1LC3 and GABARAPL2, to reveal a C-terminal glycine. Exposure of the glycine at the C-terminus is essential for ATG8 proteins conjugation to phosphatidylethanolamine (PE) and insertion to membranes, which is necessary for autophagy. In addition to the protease activity, also mediates delipidation of ATG8 family proteins. Catalyzes delipidation of PE-conjugated forms of ATG8 proteins during macroautophagy. Compared to ATG4B, the major protein for proteolytic activation of ATG8 proteins, shows weaker ability to cleave the C-terminal amino acid of ATG8 proteins, while it displays stronger delipidation activity. In contrast to other members of the family, weakly or not involved in phagophore growth during mitophagy. This Homo sapiens (Human) protein is Cysteine protease ATG4C.